The sequence spans 1240 residues: DNA excision repair protein ERCC-6-like (1240 aa).

S14 carries the phosphoserine modification. The stretch at Y21–K54 is one TPR 1 repeat. In terms of domain architecture, Helicase ATP-binding spans S110–G278. D123–T130 provides a ligand contact to ATP. The short motif at D229–H232 is the DEAH box element. Residues F467 to F631 form the Helicase C-terminal domain. The interval F736–K760 is disordered. Residues N748–K760 are compositionally biased toward polar residues. Residues S755 and S773 each carry the phosphoserine modification. Residues D778–A813 form a disordered region. Polar residues predominate over residues T795–A809. Residue S821 is modified to Phosphoserine. Residues Q845 to P879 are disordered. Residues S966, S998, S1001, and S1021 each carry the phosphoserine modification. The interval K974–R1085 is disordered. A compositionally biased stretch (polar residues) spans L978–S998. Residues S1049–S1065 are compositionally biased toward polar residues. The residue at position 1057 (T1057) is a Phosphothreonine. Phosphoserine occurs at positions 1092 and 1112. Over residues M1104–E1117 the composition is skewed to acidic residues. Positions M1104–V1185 are disordered. Over residues E1135–P1165 the composition is skewed to polar residues. At S1172 the chain carries Phosphoserine. A TPR 2 repeat occupies Y1191–D1224.

This sequence belongs to the SNF2/RAD54 helicase family. In terms of assembly, interacts with PLK1, which phosphorylates it. Both proteins are mutually dependent on each other for correct subcellular localization. Interacts (via N-terminal TPR repeat) with BEND3 (via BEN domains 1 and 3); the interaction is direct. In terms of processing, phosphorylation by PLK1 prevents the association with chromosome arms and restricts its localization to the kinetochore-centromere region. In terms of tissue distribution, expressed mainly in the neural tube and heart of 10.5 dpc embryo. Significantly down-regulated after alcohol exposure in embryonic brain and heart, but not in embryonic kidney, liver, or lung.

Its subcellular location is the chromosome. It localises to the centromere. The protein localises to the kinetochore. It catalyses the reaction ATP + H2O = ADP + phosphate + H(+). In terms of biological role, DNA helicase that acts as a tension sensor that associates with catenated DNA which is stretched under tension until it is resolved during anaphase. Functions as ATP-dependent DNA translocase. Can promote Holliday junction branch migration (in vitro). The polypeptide is DNA excision repair protein ERCC-6-like (Ercc6l) (Mus musculus (Mouse)).